A 255-amino-acid chain; its full sequence is Zinc import ATP-binding protein ZnuC (255 aa).

The 216-residue stretch at 4–219 (VDVDGLSLRY…PEYRALFGTG (216 aa)) folds into the ABC transporter domain. 36–43 (GPNGSGKT) lines the ATP pocket. The tract at residues 234–255 (EHDHHDGCAHGQATEDRTEAAE) is disordered.

It belongs to the ABC transporter superfamily. Zinc importer (TC 3.A.1.15.5) family. In terms of assembly, the complex is composed of two ATP-binding proteins (ZnuC), two transmembrane proteins (ZnuB) and a solute-binding protein (ZnuA).

The protein localises to the cell inner membrane. It carries out the reaction Zn(2+)(out) + ATP(in) + H2O(in) = Zn(2+)(in) + ADP(in) + phosphate(in) + H(+)(in). Its function is as follows. Part of the ABC transporter complex ZnuABC involved in zinc import. Responsible for energy coupling to the transport system. The chain is Zinc import ATP-binding protein ZnuC from Roseobacter denitrificans (strain ATCC 33942 / OCh 114) (Erythrobacter sp. (strain OCh 114)).